Reading from the N-terminus, the 330-residue chain is Mas-related G-protein coupled receptor member B8 (330 aa).

The Extracellular portion of the chain corresponds to 1-33; it reads MDSSFPDWNIEFREQNESYFMESSSCDMSLAMS. The N-linked (GlcNAc...) asparagine glycan is linked to N16. The helical transmembrane segment at 34-54 threads the bilayer; that stretch reads LLSIIIAIIGLTGNVIVLQLL. The Cytoplasmic portion of the chain corresponds to 55-62; sequence GFHMHRNA. A helical transmembrane segment spans residues 63-83; the sequence is FSVYIFNLSGANFLFLCTHIV. Topologically, residues 84 to 101 are extracellular; it reads FSLENLIRQFHYIDIHMA. Residues 102–122 form a helical membrane-spanning segment; that stretch reads LFSVNVTILAYLAGVSMITAI. Topologically, residues 123–146 are cytoplasmic; that stretch reads SVEYWLSVLWPTWYHAQRPKHTST. Residues 147-167 traverse the membrane as a helical segment; it reads VICTLLWVFSLLLTLWNWIIC. Over 168 to 177 the chain is Extracellular; it reads KVLDYIYNWD. The helical transmembrane segment at 178 to 198 threads the bilayer; sequence MCWKLALIIVVWLLVLFVVLS. Topologically, residues 199-219 are cytoplasmic; that stretch reads RSNQALLFRVFCGSQQTPVTR. Residues 220 to 240 form a helical membrane-spanning segment; that stretch reads LLVTIMLTALVVLICGFGIGI. The Extracellular portion of the chain corresponds to 241–260; that stretch reads CFFYWKKEENSIMPCGYFYE. A helical transmembrane segment spans residues 261 to 281; that stretch reads TILLLSGVNSCANPIICLFVG. Residues 282 to 330 are Cytoplasmic-facing; sequence SIKHCQFQCGTLRLILQRAIQESPEEEDEEVEEVVEQEGGEEDEESTTL. Residues 302–330 form a disordered region; that stretch reads QESPEEEDEEVEEVVEQEGGEEDEESTTL. Residues 304–330 are compositionally biased toward acidic residues; that stretch reads SPEEEDEEVEEVVEQEGGEEDEESTTL.

It belongs to the G-protein coupled receptor 1 family. Mas subfamily.

Its subcellular location is the membrane. In terms of biological role, orphan receptor. Probably involved in the function of nociceptive neurons. May regulate nociceptor function and/or development, including the sensation or modulation of pain. In Mus musculus (Mouse), this protein is Mas-related G-protein coupled receptor member B8 (Mrgprb8).